Consider the following 571-residue polypeptide: Proline--tRNA ligase (571 aa).

This sequence belongs to the class-II aminoacyl-tRNA synthetase family. ProS type 1 subfamily. As to quaternary structure, homodimer.

Its subcellular location is the cytoplasm. The catalysed reaction is tRNA(Pro) + L-proline + ATP = L-prolyl-tRNA(Pro) + AMP + diphosphate. In terms of biological role, catalyzes the attachment of proline to tRNA(Pro) in a two-step reaction: proline is first activated by ATP to form Pro-AMP and then transferred to the acceptor end of tRNA(Pro). As ProRS can inadvertently accommodate and process non-cognate amino acids such as alanine and cysteine, to avoid such errors it has two additional distinct editing activities against alanine. One activity is designated as 'pretransfer' editing and involves the tRNA(Pro)-independent hydrolysis of activated Ala-AMP. The other activity is designated 'posttransfer' editing and involves deacylation of mischarged Ala-tRNA(Pro). The misacylated Cys-tRNA(Pro) is not edited by ProRS. The polypeptide is Proline--tRNA ligase (Pseudomonas paraeruginosa (strain DSM 24068 / PA7) (Pseudomonas aeruginosa (strain PA7))).